Consider the following 140-residue polypeptide: Nucleoside diphosphate kinase (140 aa).

Positions 10, 58, 86, 92, 103, and 113 each coordinate ATP. The active-site Pros-phosphohistidine intermediate is H116.

The protein belongs to the NDK family. As to quaternary structure, homohexamer. It depends on Mg(2+) as a cofactor.

The protein localises to the cytoplasm. The enzyme catalyses a 2'-deoxyribonucleoside 5'-diphosphate + ATP = a 2'-deoxyribonucleoside 5'-triphosphate + ADP. The catalysed reaction is a ribonucleoside 5'-diphosphate + ATP = a ribonucleoside 5'-triphosphate + ADP. Major role in the synthesis of nucleoside triphosphates other than ATP. The ATP gamma phosphate is transferred to the NDP beta phosphate via a ping-pong mechanism, using a phosphorylated active-site intermediate. This Methanocaldococcus jannaschii (strain ATCC 43067 / DSM 2661 / JAL-1 / JCM 10045 / NBRC 100440) (Methanococcus jannaschii) protein is Nucleoside diphosphate kinase.